Here is a 314-residue protein sequence, read N- to C-terminus: Ribosomal protein L11 methyltransferase (314 aa).

Residues Thr-152, Gly-184, Asp-206, and Asn-248 each contribute to the S-adenosyl-L-methionine site.

The protein belongs to the methyltransferase superfamily. PrmA family.

Its subcellular location is the cytoplasm. The enzyme catalyses L-lysyl-[protein] + 3 S-adenosyl-L-methionine = N(6),N(6),N(6)-trimethyl-L-lysyl-[protein] + 3 S-adenosyl-L-homocysteine + 3 H(+). Functionally, methylates ribosomal protein L11. This is Ribosomal protein L11 methyltransferase from Geotalea daltonii (strain DSM 22248 / JCM 15807 / FRC-32) (Geobacter daltonii).